The chain runs to 241 residues: Triosephosphate isomerase (241 aa).

Residue 9–11 (NWK) participates in substrate binding. Histidine 96 acts as the Electrophile in catalysis. The Proton acceptor role is filled by glutamate 165. Substrate contacts are provided by residues glycine 171, serine 204, and 225–226 (GG).

The protein belongs to the triosephosphate isomerase family. In terms of assembly, homodimer.

The protein resides in the cytoplasm. The enzyme catalyses D-glyceraldehyde 3-phosphate = dihydroxyacetone phosphate. It functions in the pathway carbohydrate biosynthesis; gluconeogenesis. The protein operates within carbohydrate degradation; glycolysis; D-glyceraldehyde 3-phosphate from glycerone phosphate: step 1/1. Its function is as follows. Involved in the gluconeogenesis. Catalyzes stereospecifically the conversion of dihydroxyacetone phosphate (DHAP) to D-glyceraldehyde-3-phosphate (G3P). The polypeptide is Triosephosphate isomerase (Prochlorococcus marinus subsp. pastoris (strain CCMP1986 / NIES-2087 / MED4)).